Consider the following 343-residue polypeptide: Interferon-inducible protein AIM2 (343 aa).

Positions 1-87 (MESKYKEILL…AKRLQEEKEK (87 aa)) constitute a Pyrin domain. One can recognise an HIN-200 domain in the interval 138–337 (MVAQQESIRE…SGVHSTIKVI (200 aa)).

The protein belongs to the HIN-200 family. As to quaternary structure, self-associates; forms homooligomers in response to cytosolic double-stranded DNA (dsDNA) and the dsDNA seems to serve as oligomerization platform. Component of AIM2 inflammasome, which consists of a signal sensor component (AIM2), an adapter (PYCARD/ASC), which recruits an effector pro-inflammatory caspase (CASP1). Interacts (via pyrin domain) with PYCARD/ASC (via pyrin domain); interaction is direct. Component of the AIM2 PANoptosome complex, a multiprotein complex that drives inflammatory cell death (PANoptosis). Interacts with PYDC5; disrupts assembly of the AIM2 inflammasome complex. Interacts with EIF2AK2/PKR. Interacts with MAPRE1. Interacts with IFI16. Interacts with isoform IFI16-beta of IFI16; preventing the interaction between AIM2 and PYCARD/ASC. Interacts with RACK1; promoting association with PP2A phosphatase and dephosphorylation of AKT1. Interacts with TRIM11; promoting AIM2 recruitment to autophagosomes and autophagy-dependent degradation. (Microbial infection) Interacts with human herpesvirus 8 protein SOX/ORF37; this interaction inhibits AIM2 polymerization and subsequent inflammasome activation. Degraded via selective autophagy following interaction with TRIM11. As to expression, expressed in spleen, small intestine, peripheral blood leukocytes, and testis.

The protein resides in the cytoplasm. Its subcellular location is the inflammasome. It localises to the nucleus. Its activity is regulated as follows. Inactive in absence of double-stranded DNA (dsDNA). Homooligomerizes upon binding to dsDNA, dsDNA serving as an oligomerization platform. AIM2 requires large dsDNA to generate a structural template that couples dsDNA ligand-binding and homooligomerization. Homooligomerization is followed by recruitment of PYCARD/ASC to initiate speck formation (nucleation). AIM2 and PYCARD/ASC homooligomer filaments assemble bidirectionally and the recognition between AIM2 and PYCARD/ASC oligomers occurs in a head-to-tail manner. Clustered PYCARD/ASC nucleates the formation of CASP1 filaments through the interaction of their respective CARD domains, acting as a platform for CASP1 polymerization and activation. Active CASP1 then specifically processes protein precursors, such as gasdermin-D (GSDMD), IL1B and IL18, leading to the release of mature cytokines in the extracellular milieu or pyroptosis, depending on cell type. AIM2 can be activated in response to events that cause genomic DNA (HIV protease inhibitor nelfinavir) or mitochondrial DNA release in the cytoplasm (such as Perfluoroalkyl substance pollutants or cholesterol overload). Activation of the AIM2 inflammasome is inhibited by isoform IFI16-beta of IFI16, which prevents the interaction between AIM2 and PYCARD/ASC. Activation of the AIM2 inflammasome is inhibited by TRIM11, which promotes autophagy-dependent degradation of AIM2. Functionally, sensor component of the AIM2 inflammasome, which mediates inflammasome activation in response to the presence of double-stranded DNA (dsDNA) in the cytosol, leading to subsequent pyroptosis. Inflammasomes are supramolecular complexes that assemble in the cytosol in response to pathogens and other damage-associated signals and play critical roles in innate immunity and inflammation. Acts as a recognition receptor (PRR): specifically recognizes and binds dsDNA in the cytosol, and mediates the formation of the inflammasome polymeric complex composed of AIM2, CASP1 and PYCARD/ASC. Recruitment of pro-caspase-1 (proCASP1) to the AIM2 inflammasome promotes caspase-1 (CASP1) activation, which subsequently cleaves and activates inflammatory cytokines IL1B and IL18 and gasdermin-D (GSDMD), promoting cytokine secretion. In some cells, CASP1 activation mediates cleavage and activation of GSDMD, triggering pyroptosis without promoting cytokine secretion. Detects cytosolic dsDNA of viral and bacterial origin in a non-sequence-specific manner. Involved in the DNA damage response caused by acute ionizing radiation by mediating pyroptosis of intestinal epithelial cells and bone marrow cells in response to double-strand DNA breaks. Mechanistically, AIM2 senses DNA damage in the nucleus to mediate inflammasome assembly and inflammatory cell death. Also acts as a regulator of neurodevelopment via its role in the DNA damage response: acts by promoting neural cell death in response to DNA damage in the developing brain, thereby purging genetically compromised cells of the central nervous system. Pyroptosis mediated by the AIM2 inflammasome in response to DNA damage is dependent on GSDMD without involving IL1B and IL18 cytokine secretion. Also acts as a mediator of pyroptosis, necroptosis and apoptosis (PANoptosis), an integral part of host defense against pathogens, in response to bacterial infection. Can also trigger PYCARD/ASC-dependent, caspase-1-independent cell death that involves caspase-8 (CASP8). Also acts as a tumor suppressor independently of its role in inflammatory response. Able to suppress overt cell proliferation in enterocytes: restricts stem cell proliferation in the intestinal mucosa in an inflammasome-independent manner, contributing to a decrease in the likelihood of colorectal cancer development. AIM2 suppresses cell proliferation by inhibiting phosphorylation of AKT1 at 'Ser-473', preventing AKT1 activation and AKT-mTOR signaling pathway. Inhibits AKT1 phosphorylation both by inhibiting the activity of PRKDC/DNA-PK kinase and promoting dephosphorylation by PP2A phosphatase. Also acts as a key regulator of regulatory T-cells (Treg) homeostasis by promoting their stability: acts by preventing AKT1 activation. Its role in Treg homeostasis is important to restain autoimmune diseases. In Homo sapiens (Human), this protein is Interferon-inducible protein AIM2.